A 218-amino-acid chain; its full sequence is Small ribosomal subunit protein uS3 (218 aa).

The region spanning I40–K109 is the KH type-2 domain.

Belongs to the universal ribosomal protein uS3 family. Part of the 30S ribosomal subunit. Forms a tight complex with proteins S10 and S14.

Its function is as follows. Binds the lower part of the 30S subunit head. Binds mRNA in the 70S ribosome, positioning it for translation. This chain is Small ribosomal subunit protein uS3, found in Orientia tsutsugamushi (strain Boryong) (Rickettsia tsutsugamushi).